The chain runs to 158 residues: Small ribosomal subunit protein uS7 (158 aa).

It belongs to the universal ribosomal protein uS7 family. As to quaternary structure, part of the 30S ribosomal subunit. Contacts proteins S9 and S11.

In terms of biological role, one of the primary rRNA binding proteins, it binds directly to 16S rRNA where it nucleates assembly of the head domain of the 30S subunit. Is located at the subunit interface close to the decoding center, probably blocks exit of the E-site tRNA. The sequence is that of Small ribosomal subunit protein uS7 from Leptospira biflexa.